Reading from the N-terminus, the 469-residue chain is Asparagine--tRNA ligase (469 aa).

The protein belongs to the class-II aminoacyl-tRNA synthetase family. In terms of assembly, homodimer.

It localises to the cytoplasm. It catalyses the reaction tRNA(Asn) + L-asparagine + ATP = L-asparaginyl-tRNA(Asn) + AMP + diphosphate + H(+). This chain is Asparagine--tRNA ligase, found in Porphyromonas gingivalis (strain ATCC 33277 / DSM 20709 / CIP 103683 / JCM 12257 / NCTC 11834 / 2561).